The primary structure comprises 288 residues: L-threonine kinase (288 aa).

An ATP-binding site is contributed by 80 to 90; that stretch reads PIAKGMASSTA.

Belongs to the GHMP kinase family. PduX subfamily.

It localises to the cytoplasm. It catalyses the reaction L-threonine + ATP = O-phospho-L-threonine + ADP + H(+). It participates in cofactor biosynthesis; adenosylcobalamin biosynthesis. Its pathway is polyol metabolism; 1,2-propanediol degradation. Its function is as follows. L-threonine kinase that catalyzes the conversion of L-threonine to L-threonine-O-3-phosphate. Involved in the de novo synthesis of adenosylcobalamin (coenzyme B12) and the assimilation of cobyric acid. Functionally, expression of a cosmid containing the full 21-gene pdu operon in E.coli allows E.coli to grow on 1,2-propanediol (1,2-PD) with the appearance of bacterial microcompartments (BMC) in its cytoplasm. The 1,2-PD-specific bacterial microcompartment (BMC) concentrates low levels of 1,2-PD catabolic enzymes, concentrates volatile reaction intermediates thus enhancing pathway flux and keeps the level of toxic, mutagenic propionaldehyde low. This gene probably benefits from its induction via the Pdu promoter, rather than a physical interaction with the BMC. This is L-threonine kinase from Citrobacter freundii.